Consider the following 321-residue polypeptide: Protoheme IX farnesyltransferase (321 aa).

A run of 10 helical transmembrane segments spans residues 28 to 48 (VMSL…DPVH), 49 to 69 (PIVG…SGAL), 94 to 114 (VMPN…VFTL), 116 to 136 (IVAN…YVVI), 149 to 169 (IVIG…AATG), 176 to 196 (FILF…LALG), 222 to 242 (ILLY…LGFA), 247 to 267 (GMLS…VYIV), 277 to 297 (AKAL…EIVV), and 300 to 320 (LVPI…PGFF).

Belongs to the UbiA prenyltransferase family. Protoheme IX farnesyltransferase subfamily.

It localises to the cell inner membrane. It carries out the reaction heme b + (2E,6E)-farnesyl diphosphate + H2O = Fe(II)-heme o + diphosphate. Its pathway is porphyrin-containing compound metabolism; heme O biosynthesis; heme O from protoheme: step 1/1. Functionally, converts heme B (protoheme IX) to heme O by substitution of the vinyl group on carbon 2 of heme B porphyrin ring with a hydroxyethyl farnesyl side group. The chain is Protoheme IX farnesyltransferase from Beijerinckia indica subsp. indica (strain ATCC 9039 / DSM 1715 / NCIMB 8712).